Reading from the N-terminus, the 45-residue chain is Large ribosomal subunit protein bL34 (45 aa).

It belongs to the bacterial ribosomal protein bL34 family.

The polypeptide is Large ribosomal subunit protein bL34 (Beutenbergia cavernae (strain ATCC BAA-8 / DSM 12333 / CCUG 43141 / JCM 11478 / NBRC 16432 / NCIMB 13614 / HKI 0122)).